The chain runs to 312 residues: Transcription initiation factor IIB-2 (312 aa).

Residues Ser2–Glu34 form a TFIIB-type zinc finger. Zn(2+) contacts are provided by Cys6, Cys9, Cys26, and Cys29. 2 repeat units span residues Met115–Lys192 and Phe216–Pro290.

This sequence belongs to the TFIIB family. In terms of assembly, associates with TFIID-IIA (DA complex) to form TFIID-IIA-IIB (DAB-complex) which is then recognized by polymerase II.

It localises to the nucleus. Functionally, general factor that plays a major role in the activation of eukaryotic genes transcribed by RNA polymerase II. The polypeptide is Transcription initiation factor IIB-2 (TFIIB2) (Arabidopsis thaliana (Mouse-ear cress)).